The chain runs to 629 residues: uncharacterized protein (629 aa).

Polar residues predominate over residues 1–11 (MSDDQQNGKQN). 4 disordered regions span residues 1 to 24 (MSDD…EQDD), 62 to 87 (SNNN…SNYN), 197 to 464 (SEES…SSLI), and 493 to 560 (PTPT…STPD). The span at 247–264 (PSSSSSSSSLINSPTTSK) shows a compositional bias: low complexity. Positions 274–288 (PTINPKSLFGLSSTI) are enriched in polar residues. The span at 294–430 (VKTEKEKEKE…DETLNKETPH (137 aa)) shows a compositional bias: basic and acidic residues. Low complexity-rich tracts occupy residues 434–464 (PHIT…SSLI) and 493–554 (PTPT…NNNN).

This is an uncharacterized protein from Dictyostelium discoideum (Social amoeba).